Consider the following 239-residue polypeptide: Transcriptional regulatory protein DcuR (239 aa).

Positions 3-121 constitute a Response regulatory domain; that stretch reads NVLIIDDDAM…RFEEALTGWR (119 aa). D56 bears the 4-aspartylphosphate mark. A DNA-binding region (H-T-H motif) is located at residues 181 to 200; it reads TDELANEVNISRVSCRKYLI.

In terms of processing, phosphorylated and activated by DcuS.

It is found in the cytoplasm. Member of the two-component regulatory system DcuR/DcuS. Involved in the C4-dicarboxylate-stimulated regulation of the genes encoding the anaerobic fumarate respiratory system (frdABCD; nuoAN; dcuB; dcuC; sdhCDAB; etc.). Weakly regulates the aerobic C4-dicarboxylate transporter dctA. The chain is Transcriptional regulatory protein DcuR (dcuR) from Escherichia coli O6:H1 (strain CFT073 / ATCC 700928 / UPEC).